We begin with the raw amino-acid sequence, 321 residues long: Ribosomal RNA small subunit methyltransferase H (321 aa).

Residues 33 to 35 (AGH), Asp58, Phe85, Asp111, and Gln118 each bind S-adenosyl-L-methionine.

This sequence belongs to the methyltransferase superfamily. RsmH family.

The protein resides in the cytoplasm. It carries out the reaction cytidine(1402) in 16S rRNA + S-adenosyl-L-methionine = N(4)-methylcytidine(1402) in 16S rRNA + S-adenosyl-L-homocysteine + H(+). In terms of biological role, specifically methylates the N4 position of cytidine in position 1402 (C1402) of 16S rRNA. This chain is Ribosomal RNA small subunit methyltransferase H, found in Chloroherpeton thalassium (strain ATCC 35110 / GB-78).